The primary structure comprises 330 residues: Phenylalanine--tRNA ligase alpha subunit (330 aa).

Glutamate 257 serves as a coordination point for Mg(2+).

The protein belongs to the class-II aminoacyl-tRNA synthetase family. Phe-tRNA synthetase alpha subunit type 1 subfamily. Tetramer of two alpha and two beta subunits. The cofactor is Mg(2+).

The protein localises to the cytoplasm. It carries out the reaction tRNA(Phe) + L-phenylalanine + ATP = L-phenylalanyl-tRNA(Phe) + AMP + diphosphate + H(+). The chain is Phenylalanine--tRNA ligase alpha subunit from Acaryochloris marina (strain MBIC 11017).